Consider the following 331-residue polypeptide: Gamma-parvin (331 aa).

Position 1 is an N-acetylmethionine (methionine 1). The segment at 18 to 38 is disordered; sequence QPTEEELPRGGKKKYLSPNSK. Calponin-homology (CH) domains are found at residues 44–151 and 210–317; these read EELQ…KRFQ and HAVQ…QKHS.

Belongs to the parvin family. In terms of assembly, interacts with ILK; the interaction promotes the establishment of cell polarity required for leukocyte migration. Interacts with ARHGEF6; the guanine nucleotide exchange factor activity of ARHGEF6 is essential for the PARVG-induced enhancement of cell spreading. In terms of tissue distribution, expressed strongly in spleen and testis, moderately in lung and weakly in brain and heart.

It is found in the cell junction. Its subcellular location is the focal adhesion. The protein resides in the cell membrane. It localises to the cytoplasm. The protein localises to the cytoskeleton. Plays a role with ILK in promoting the cell adhesion and spreading of leukocytes. The chain is Gamma-parvin (Parvg) from Mus musculus (Mouse).